The primary structure comprises 493 residues: UPF0699 transmembrane protein YdbT (493 aa).

Transmembrane regions (helical) follow at residues 18–38 (CHTIIQTIKNIILPFFFVYIV), 46–66 (FYGAIALGVLFIWLVAASIIK), 188–208 (LMAASTSGGIGVIISAVFALI), 232–252 (IGIYAVLIFIGLFIAWIFSIA), 370–390 (VIFSLFLIIPLCIFFQPWGYL), and 393–413 (ILLPIELLFGYLAYKEAAWTI).

This sequence belongs to the UPF0699 family.

It is found in the cell membrane. The sequence is that of UPF0699 transmembrane protein YdbT (ydbT) from Bacillus subtilis (strain 168).